The following is a 178-amino-acid chain: uncharacterized protein (178 aa).

Positions 1–19 (MINRKILLTSLLLIFTVLS) are cleaved as a signal peptide. Active-site residues include Arg52, Glu60, and Arg94.

Belongs to the thermonuclease family.

This is an uncharacterized protein from Haemophilus influenzae (strain ATCC 51907 / DSM 11121 / KW20 / Rd).